We begin with the raw amino-acid sequence, 539 residues long: CTP synthase (539 aa).

The segment at 1-268 (MSFKSIFLTG…SDFLLNKLGF (268 aa)) is amidoligase domain. S14 serves as a coordination point for CTP. Residue S14 participates in UTP binding. Residue 15-20 (SLGKGL) coordinates ATP. L-glutamine is bound at residue Y55. An ATP-binding site is contributed by D72. Positions 72 and 142 each coordinate Mg(2+). CTP is bound by residues 149-151 (DIE), 188-193 (KTKPTQ), and K224. UTP-binding positions include 188–193 (KTKPTQ) and K224. The Glutamine amidotransferase type-1 domain maps to 294-532 (RIGLVGKYLE…IRAAKAYSLE (239 aa)). G353 serves as a coordination point for L-glutamine. Catalysis depends on C380, which acts as the Nucleophile; for glutamine hydrolysis. L-glutamine-binding positions include 381 to 384 (LGMQ), E404, and R460. Residues H505 and E507 contribute to the active site.

The protein belongs to the CTP synthase family. Homotetramer.

It catalyses the reaction UTP + L-glutamine + ATP + H2O = CTP + L-glutamate + ADP + phosphate + 2 H(+). The enzyme catalyses L-glutamine + H2O = L-glutamate + NH4(+). The catalysed reaction is UTP + NH4(+) + ATP = CTP + ADP + phosphate + 2 H(+). It participates in pyrimidine metabolism; CTP biosynthesis via de novo pathway; CTP from UDP: step 2/2. Its activity is regulated as follows. Allosterically activated by GTP, when glutamine is the substrate; GTP has no effect on the reaction when ammonia is the substrate. The allosteric effector GTP functions by stabilizing the protein conformation that binds the tetrahedral intermediate(s) formed during glutamine hydrolysis. Inhibited by the product CTP, via allosteric rather than competitive inhibition. Catalyzes the ATP-dependent amination of UTP to CTP with either L-glutamine or ammonia as the source of nitrogen. Regulates intracellular CTP levels through interactions with the four ribonucleotide triphosphates. This is CTP synthase from Chlamydia trachomatis serovar A (strain ATCC VR-571B / DSM 19440 / HAR-13).